Here is a 433-residue protein sequence, read N- to C-terminus: Adenylyltransferase and sulfurtransferase UBA4 (433 aa).

Residues Gly70, Asp91, 98–102 (SNLHR), Lys115, and 159–160 (DT) contribute to the ATP site. Residues Cys201 and Cys204 each coordinate Zn(2+). The active-site Glycyl thioester intermediate; for adenylyltransferase activity is Cys218. Residues Cys279 and Cys282 each contribute to the Zn(2+) site. The Rhodanese domain maps to 332–431 (SGNNKVLLDV…YIDDVDQSIP (100 aa)). The active-site Cysteine persulfide intermediate; for sulfurtransferase activity is the Cys390.

In the N-terminal section; belongs to the HesA/MoeB/ThiF family. UBA4 subfamily. Requires Zn(2+) as cofactor.

The protein resides in the cytoplasm. The protein localises to the cytosol. Its pathway is tRNA modification; 5-methoxycarbonylmethyl-2-thiouridine-tRNA biosynthesis. Its function is as follows. Plays a central role in 2-thiolation of mcm(5)S(2)U at tRNA wobble positions of cytosolic tRNA(Lys), tRNA(Glu) and tRNA(Gln). Acts by mediating the C-terminal thiocarboxylation of sulfur carrier URM1. Its N-terminus first activates URM1 as acyl-adenylate (-COAMP), then the persulfide sulfur on the catalytic cysteine is transferred to URM1 to form thiocarboxylation (-COSH) of its C-terminus. The reaction probably involves hydrogen sulfide that is generated from the persulfide intermediate and that acts as a nucleophile towards URM1. Subsequently, a transient disulfide bond is formed. Does not use thiosulfate as sulfur donor; NFS1 probably acting as a sulfur donor for thiocarboxylation reactions. Prior mcm(5) tRNA modification by the elongator complex is required for 2-thiolation. May also be involved in protein urmylation. This Candida glabrata (strain ATCC 2001 / BCRC 20586 / JCM 3761 / NBRC 0622 / NRRL Y-65 / CBS 138) (Yeast) protein is Adenylyltransferase and sulfurtransferase UBA4.